Here is a 2878-residue protein sequence, read N- to C-terminus: MDGRDFGPQRSVHGPPPPLLSGLAMDSHRVGAATAGRLPSSGLPGPPPPGKYMAGLNLHPHPGFSHLPSGLYPSYLHLNHLDPPSSGSPLLSQLGQPSIFDTQKDGFYLPAPGTLHAHTPSSRTPSGHSSGGPAKGSSREGTGKDRAGRGGDPPPLFGKKDPRAREEVSGPRGVVDLTQEARAEGRQDRGSSRLAERLSPFLAEVKAKGALQPSALSLCNGVVDAGLVAELGRGGAKEVARQEENARLLRRAEALLPAARPCGSPLPPPPPLPPKGPPAPPSSTPAGVYTVFREPGREHRVVAPTFVPSVEAFDERVGPIQIASQARDVRAREREPGRPGVLQGPPGSPRLERPEVLREKSSVIRSLKRPPPSDGPPAARSSRSSPDARAYLPPKELLKPEADPRPCERAPRGPSASAAQQAAKLFGLEPSRPPGPEHKWKPFELGNFATTQMAVLAAQHHHASRAEEEAAVATASKKAYLDPGGAMPRASATCGRPGADLHSAAHGPGEASAMQSLIKYSGSFAREAVAVRPGGCGKKSPFGGLGTMKPEPTPTSAGPPRAQARLTHPGVPTAGGGRQLKRDPERPESAKAFGREGSGAQGEAEVRHPPVGIAVAVARQKDSGSSSRLGPGLGDQERTLSLNNVKGHGRTDDECDRARHREDRLLGTRLDRDQEKLLRESKELADLARLHPTSCAPNGLNPNLMVTGGPTLAGSGRWSADPAAHLATNPWLPRSGSTSMWLAGHPYGLGPPSLHQGMAPAFPPGLGGSLPSAYQFVRDPQSGQLVVIPSDHLPHFAELMERAAVPPLWPALYPPGRSPLHHAQQLQLFSQQHFLRQQELLYLQQQAAQALELQRSAQLVERLKAQEHRTEMEEKISKRSLETTGKAGLSAAGPGLLPRKSAGLANGPAGSHGKAVSPPPSPRASPVTSLKAKVIQKVEDVSKPPAYTYPATPSSHPSSPPPASPPPTPGLTRKEEAPENVVEKKDLELEKETPSPFQALFTDIPPRYPFQALPPHYGRPYPFLLQPAAASDADGLAPDVPLPADGPERLALSPEDKPICLSPSKIPEPPRDSPEEEQLADREVKAEVEDIEEGPTELPPLESPLALPVPETMVAVSPAGGCGGSPLEAQALSTAGPGCREPSEVSDFAQVAEPQIELPSKTEHRMTALELGTQLTPEPLVETKEEPVEVPLDVPMEEPTTEAGPEDSLPQPSLTEPQPSLELSDCDLPVPEGQCLNLEAQEAVPAPASTCYLEETHSESLLPGLDDPLAGMNALAAAAELPQARPLPSLGPGVPAGEKLDTAPSLVLEHSFLQGITLLSEIAELELDRRGQEAADPEPNLVVRPSLESLLAASSHMLKEVLESPFSDPLKNLRLPRELNSNKKYSWMQKKEERMFAMKSSLEDMDALELDFRMRLAEVQRRYKEKQRELVKLQRRRDSGDRHEDAHRSLARRGPGRPRKRTHTLSALSPPCKRKSHSSSGKGLSSKSLLTSDDYDLGAGIRKRHKGPEEEQEALMGMGKARSRNQSWDDHDSSSDFMSQLKIKKKKMASDQEQLASKLDRALSLTKQDKLKSPFKFSDGPGGKPKTGGGCGRFLTQYDSLLGKDRKALAKGLGLSLKPSREGKHKRASKARKMEGGFQARGQPKSVHSPFASEVSSQSYNTDSDEDEDFLKNEWSAQGPSSSKLTSSLLCGMVPKNSKPATGPKLTKRGLAGPRTLKPKVVTSRKQSFCLLLREAEARSSFSDSSEEDSFDQDDSSEEEEEELEEEEEDEEEEGIGSYRLGAGEQALSPSLEESGLGLLARFAASALPSPVVGPPLSVVQLEAEQKARKKEERQSLLGTEFEYTDSESEVKVPKQSAAGLLRTKKGVGEPGQSLAAPGPGSRASGPSSPDKAKLVSEKGRKARKIRGPKEPGFEAGPEASDDDLWTRRRSERIFLHDASAAVQATSNTAPATKPSRCGRGGAPSPRKDTGRAKDRKDPRKKKRGKEAGSAATLPPPRVSTLPDSRAPHPGALATAKRSKAKARGKEAKKENRGKGGAVSKLMECMAAEEDFEANQDSSFSEDEHLPRGGATERPLTPAPRSCIIDKEELKDGLRVLIPLDDKLLYAGHVQTVHSPDIYRVVVEGERGNRPHIYCLEQLLQEAIIDVRPASTRFLPQGTRIAAYWSQQYRCLYPGTVVRGLLDLEDDGDLITVEFDDGDTGRIPLSHIRLLPPDYKIQCAEPSPALLVPSAKRRSRKTSKDTGEVKEGAATGPQEATGGKARGRGRKPSTKAKADRAVVLEEGAATNEVPSAPLALEPISTPNSKKSTPEPVDKRARAPKARSISAQPSPVPPTFSSCPAPEPFGELPTPATAPLVTMPVTMPATRPKPKKARAAEGSGAKGPRRPGEDDELLVKLDHEGVMSPKSKKAKEALLLREDPGPGGWPESTGLLSLGSYSPAVGSSEPKATWPKGLDGDLTQEPGPGLPLEDPGNSKNPDKAQAEQDGAEESETTSSSSSSSSSSSSSSSSSSSSSSSSSGSETEGEEDAEKNREDGRGAGGRTCSAASSRASSPASSSSSSSSSSSSSSSSSSSSSSSSTTDEDSSCSSDEEAAPAPAAGPSTQPALPTKVSKPPSKARSSAHSPGKKAPTTTQPPPQPPPQPQQTLQPKTQAGAGAKSRPKKREGVHLPTTKELAKRQRLPSVENRPKIAAFLPARQLWKWFGKPTQRRGMKGKARKLFYKAIVRGKEMIRIGDCAVFLSAGRPNLPYIGRIQSMWESWGNNMVVRVKWFYHPEETSPGKQFHEGQHWDQKSGHSLPAALRASSQRKDFMERALYQSSHVDENDVQTVSHKCLVVGLEQYEQMLKTKKYQDSEGLYYLAGTYEPTTGMIFSTDGVPVLC.

Disordered regions lie at residues 1 to 54 (MDGR…KYMA) and 102 to 194 (TQKD…SSRL). Residues 119–128 (TPSSRTPSGH) are compositionally biased toward polar residues. Composition is skewed to basic and acidic residues over residues 137–149 (SSRE…RAGR), 158–169 (GKKDPRAREEVS), and 179–194 (QEAR…SSRL). Serine 199 bears the Phosphoserine mark. Disordered stretches follow at residues 259 to 289 (ARPC…AGVY), 313 to 442 (FDER…KWKP), 487 to 507 (MPRA…AAHG), 540 to 655 (SPFG…DDEC), 865 to 1002 (AQEH…ALFT), 1033 to 1104 (ADGL…LESP), 1127 to 1146 (LEAQ…SEVS), 1171 to 1228 (LGTQ…DCDL), 1429 to 1535 (ELVK…DSSS), 1613 to 1668 (LGLS…DEDE), 1694 to 1718 (VPKN…RTLK), and 1737 to 1787 (EARS…GEQA). Residues 264–283 (SPLPPPPPLPPKGPPAPPSS) show a composition bias toward pro residues. Basic and acidic residues-rich tracts occupy residues 327-337 (RDVRAREREPG) and 350-362 (RLER…EKSS). A compositionally biased stretch (low complexity) spans 376-390 (PPAARSSRSSPDARA). Over residues 396–411 (ELLKPEADPRPCERAP) the composition is skewed to basic and acidic residues. Phosphoserine is present on serine 540. Lysine 549 participates in a covalent cross-link: Glycyl lysine isopeptide (Lys-Gly) (interchain with G-Cter in SUMO2). Basic and acidic residues-rich tracts occupy residues 580 to 589 (LKRDPERPES) and 865 to 881 (AQEH…KRSL). Over residues 958–969 (SSPPPASPPPTP) the composition is skewed to pro residues. A compositionally biased stretch (basic and acidic residues) spans 972–993 (TRKEEAPENVVEKKDLELEKET). Phosphoserine occurs at positions 1053 and 1062. Residues 1068-1088 (EPPRDSPEEEQLADREVKAEV) are compositionally biased toward basic and acidic residues. The stretch at 1410-1442 (LDFRMRLAEVQRRYKEKQRELVKLQRRRDSGDR) forms a coiled coil. Basic and acidic residues predominate over residues 1429–1448 (ELVKLQRRRDSGDRHEDAHR). Residues 1449–1463 (SLARRGPGRPRKRTH) are compositionally biased toward basic residues. Serine 1469 carries the phosphoserine modification. The span at 1478–1492 (SSSGKGLSSKSLLTS) shows a compositional bias: low complexity. The segment covering 1745–1775 (SSEEDSFDQDDSSEEEEEELEEEEEDEEEEG) has biased composition (acidic residues). Phosphoserine is present on residues serine 1789 and serine 1795. Residues 1825 to 1835 (EQKARKKEERQ) show a composition bias toward basic and acidic residues. Disordered stretches follow at residues 1825-2040 (EQKA…GAVS), 2052-2080 (FEAN…TPAP), and 2226-2681 (LLVP…RLPS). The segment covering 1876 to 1890 (AAPGPGSRASGPSSP) has biased composition (low complexity). 4 stretches are compositionally biased toward basic and acidic residues: residues 1891–1900 (DKAKLVSEKG), 1925–1936 (LWTRRRSERIFL), 1966–1978 (PRKD…DRKD), and 2024–2034 (RGKEAKKENRG). The residue at position 2077 (threonine 2077) is a Phosphothreonine. Residues 2238–2247 (TSKDTGEVKE) show a composition bias toward basic and acidic residues. Residues 2261 to 2270 (ARGRGRKPST) show a composition bias toward basic residues. Composition is skewed to basic and acidic residues over residues 2307–2316 (STPEPVDKRA) and 2409–2419 (AKEALLLREDP). Composition is skewed to low complexity over residues 2460–2470 (EPGPGLPLEDP), 2491–2520 (TTSS…SGSE), and 2540–2578 (RTCS…SSST). Residues 2579 to 2591 (TDEDSSCSSDEEA) are compositionally biased toward acidic residues. Positions 2631-2641 (TQPPPQPPPQP) are enriched in pro residues. Serine 2681 carries the phosphoserine modification. The BAH domain occupies 2727–2872 (EMIRIGDCAV…PTTGMIFSTD (146 aa)).

This chain is Trinucleotide repeat-containing gene 18 protein (Tnrc18), found in Mus musculus (Mouse).